Reading from the N-terminus, the 613-residue chain is Dihydroxy-acid dehydratase (613 aa).

Asp-81 lines the Mg(2+) pocket. Cys-122 is a [2Fe-2S] cluster binding site. Asp-123 and Lys-124 together coordinate Mg(2+). At Lys-124 the chain carries N6-carboxylysine. Cys-193 is a binding site for [2Fe-2S] cluster. Glu-489 is a Mg(2+) binding site. Catalysis depends on Ser-515, which acts as the Proton acceptor.

It belongs to the IlvD/Edd family. As to quaternary structure, homodimer. It depends on [2Fe-2S] cluster as a cofactor. Mg(2+) serves as cofactor.

The catalysed reaction is (2R)-2,3-dihydroxy-3-methylbutanoate = 3-methyl-2-oxobutanoate + H2O. It carries out the reaction (2R,3R)-2,3-dihydroxy-3-methylpentanoate = (S)-3-methyl-2-oxopentanoate + H2O. The protein operates within amino-acid biosynthesis; L-isoleucine biosynthesis; L-isoleucine from 2-oxobutanoate: step 3/4. Its pathway is amino-acid biosynthesis; L-valine biosynthesis; L-valine from pyruvate: step 3/4. Its function is as follows. Functions in the biosynthesis of branched-chain amino acids. Catalyzes the dehydration of (2R,3R)-2,3-dihydroxy-3-methylpentanoate (2,3-dihydroxy-3-methylvalerate) into 2-oxo-3-methylpentanoate (2-oxo-3-methylvalerate) and of (2R)-2,3-dihydroxy-3-methylbutanoate (2,3-dihydroxyisovalerate) into 2-oxo-3-methylbutanoate (2-oxoisovalerate), the penultimate precursor to L-isoleucine and L-valine, respectively. The polypeptide is Dihydroxy-acid dehydratase (Pseudomonas putida (strain ATCC 700007 / DSM 6899 / JCM 31910 / BCRC 17059 / LMG 24140 / F1)).